We begin with the raw amino-acid sequence, 126 residues long: Protein ApaG (126 aa).

Residues 2–126 (DVSLPCIKIQ…FRLAVPHVLN (125 aa)) enclose the ApaG domain.

This chain is Protein ApaG, found in Vibrio cholerae serotype O1 (strain ATCC 39541 / Classical Ogawa 395 / O395).